Here is a 333-residue protein sequence, read N- to C-terminus: Na(+)/H(+) exchange regulatory cofactor NHE-RF1 (333 aa).

The region spanning 13–93 is the PDZ 1 domain; it reads LCCMEKGPDG…AVRLLVVQPQ (81 aa). Disordered regions lie at residues 90–164 and 232–333; these read VQPQ…RAVD and LAGP…FSNL. Residues 97–111 show a composition bias toward basic and acidic residues; that stretch reads QPPKTHSDPDGEAQR. Residues 112-122 show a composition bias toward low complexity; it reads EPPAAETPAAE. Over residues 124 to 133 the composition is skewed to basic and acidic residues; the sequence is SGPEERELRP. Residues 135–215 enclose the PDZ 2 domain; the sequence is LCRIKKGPNG…ETKLLVVGVL (81 aa). Composition is skewed to basic and acidic residues over residues 274–289 and 323–333; these read SETHSEPDTQEGDKRS and WSKKNELFSNL.

The protein resides in the endomembrane system. Its subcellular location is the cell projection. It localises to the filopodium. It is found in the ruffle. The protein localises to the microvillus. Scaffold protein that connects plasma membrane proteins with members of the ezrin/moesin/radixin family and thereby helps to link them to the actin cytoskeleton and to regulate their surface expression. Was first known to play a role in the regulation of the activity and subcellular location of SLC9A3. May enhance Wnt signaling. The sequence is that of Na(+)/H(+) exchange regulatory cofactor NHE-RF1 (NHERF1) from Gallus gallus (Chicken).